A 320-amino-acid chain; its full sequence is Malate dehydrogenase (320 aa).

NAD(+) is bound by residues 8-13 and aspartate 33; that span reads GAGQIG. Residues arginine 82 and arginine 88 each coordinate substrate. Residues asparagine 95 and 118-120 contribute to the NAD(+) site; that span reads ITN. Substrate contacts are provided by asparagine 120 and arginine 151. Histidine 175 functions as the Proton acceptor in the catalytic mechanism.

Belongs to the LDH/MDH superfamily. MDH type 3 family.

The enzyme catalyses (S)-malate + NAD(+) = oxaloacetate + NADH + H(+). Its function is as follows. Catalyzes the reversible oxidation of malate to oxaloacetate. The protein is Malate dehydrogenase of Pelagibacter ubique (strain HTCC1062).